The chain runs to 266 residues: Killer cell lectin-like receptor 6 (266 aa).

Residues 1–44 lie on the Cytoplasmic side of the membrane; sequence MSEPEVTYSTVRLHKSSRLQKLVRHEETQGPREAGYRKCSVCWQ. Residues 45-66 form a helical; Signal-anchor for type II membrane protein membrane-spanning segment; that stretch reads LIVKALGILCFLLLITVAVLAV. At 67-266 the chain is on the extracellular side; that stretch reads KIFQYGQHNQ…CGKKLDKFPH (200 aa). 2 N-linked (GlcNAc...) asparagine glycosylation sites follow: asparagine 87 and asparagine 104. Residues 143–261 enclose the C-type lectin domain; the sequence is GVKYWFCYRT…SHYCICGKKL (119 aa). Cystine bridges form between cysteine 149/cysteine 154, cysteine 167/cysteine 255, cysteine 171/cysteine 257, and cysteine 236/cysteine 249.

In terms of assembly, homodimer; disulfide-linked.

The protein localises to the membrane. Its function is as follows. Receptor on natural killer (NK) cells for class I MHC. This Mus musculus (Mouse) protein is Killer cell lectin-like receptor 6 (Klra6).